We begin with the raw amino-acid sequence, 91 residues long: UPF0223 protein SAR1071 (91 aa).

The protein belongs to the UPF0223 family.

In Staphylococcus aureus (strain MRSA252), this protein is UPF0223 protein SAR1071.